The sequence spans 693 residues: Polyribonucleotide nucleotidyltransferase (693 aa).

Mg(2+)-binding residues include Asp489 and Asp495. The KH domain maps to Pro556–Val615. Positions Gly625–Arg693 constitute an S1 motif domain.

Belongs to the polyribonucleotide nucleotidyltransferase family. Component of the RNA degradosome, which is a multiprotein complex involved in RNA processing and mRNA degradation. Mg(2+) serves as cofactor.

Its subcellular location is the cytoplasm. The catalysed reaction is RNA(n+1) + phosphate = RNA(n) + a ribonucleoside 5'-diphosphate. Involved in mRNA degradation. Catalyzes the phosphorolysis of single-stranded polyribonucleotides processively in the 3'- to 5'-direction. The protein is Polyribonucleotide nucleotidyltransferase of Francisella philomiragia subsp. philomiragia (strain ATCC 25017 / CCUG 19701 / FSC 153 / O#319-036).